Here is a 353-residue protein sequence, read N- to C-terminus: UPF0283 membrane protein YPA_1696 (353 aa).

3 consecutive transmembrane segments (helical) span residues 71 to 91 (MVTA…VQWV), 101 to 121 (IALG…GSVV), and 214 to 234 (ESAL…FIAW).

It belongs to the UPF0283 family.

Its subcellular location is the cell inner membrane. The protein is UPF0283 membrane protein YPA_1696 of Yersinia pestis bv. Antiqua (strain Antiqua).